The sequence spans 459 residues: Cyclin-dependent kinase F-4 (459 aa).

Residues 4–283 (FKMIKEVGDG…AAEVLQHTFF (280 aa)) form the Protein kinase domain. Residues 10–18 (VGDGTFGSV) and Lys-33 each bind ATP. Asp-125 functions as the Proton acceptor in the catalytic mechanism. Position 151 is a phosphoserine (Ser-151). Residue Thr-156 is modified to Phosphothreonine. A disordered region spans residues 310 to 397 (KGVSEHGMPR…RHSRSLPETG (88 aa)). Composition is skewed to polar residues over residues 322–346 (STGTLSTTKPHSNASLKSSGLSKTG) and 366–375 (ESNNKLTTNR).

The protein belongs to the protein kinase superfamily. CMGC Ser/Thr protein kinase family. CDC2/CDKX subfamily.

The enzyme catalyses L-seryl-[protein] + ATP = O-phospho-L-seryl-[protein] + ADP + H(+). It catalyses the reaction L-threonyl-[protein] + ATP = O-phospho-L-threonyl-[protein] + ADP + H(+). The catalysed reaction is [DNA-directed RNA polymerase] + ATP = phospho-[DNA-directed RNA polymerase] + ADP + H(+). This chain is Cyclin-dependent kinase F-4 (CDKF-4), found in Oryza sativa subsp. japonica (Rice).